Consider the following 533-residue polypeptide: GMP synthase [glutamine-hydrolyzing] (533 aa).

Residues 25–215 (SIVIFDFGSQ…VFNICKCHAN (191 aa)) enclose the Glutamine amidotransferase type-1 domain. Residue C102 is the Nucleophile of the active site. Catalysis depends on residues H189 and E191. One can recognise a GMPS ATP-PPase domain in the interval 216-408 (WTMGNYIQES…LGLPDEMIWR (193 aa)). 243–249 (SGGVDSA) provides a ligand contact to ATP.

As to quaternary structure, homodimer.

The enzyme catalyses XMP + L-glutamine + ATP + H2O = GMP + L-glutamate + AMP + diphosphate + 2 H(+). It functions in the pathway purine metabolism; GMP biosynthesis; GMP from XMP (L-Gln route): step 1/1. Its function is as follows. Catalyzes the synthesis of GMP from XMP. The protein is GMP synthase [glutamine-hydrolyzing] of Dehalococcoides mccartyi (strain ATCC BAA-2266 / KCTC 15142 / 195) (Dehalococcoides ethenogenes (strain 195)).